A 49-amino-acid chain; its full sequence is Large ribosomal subunit protein bL33B (49 aa).

It belongs to the bacterial ribosomal protein bL33 family.

This Bacillus cytotoxicus (strain DSM 22905 / CIP 110041 / 391-98 / NVH 391-98) protein is Large ribosomal subunit protein bL33B.